The chain runs to 210 residues: High frequency lysogenization protein HflD homolog (210 aa).

A coiled-coil region spans residues 103-130; the sequence is EAKAKLAERLQQIERQLPLYENDIMADQ.

It belongs to the HflD family.

Its subcellular location is the cytoplasm. It localises to the cell inner membrane. This Actinobacillus pleuropneumoniae serotype 5b (strain L20) protein is High frequency lysogenization protein HflD homolog.